A 236-amino-acid chain; its full sequence is MRLHHLHVAYLDHKASSSSSSPAPPSISPSSIPGSAAFPAFSFKCLRPLAPKISLPEPRKMIAPPDFVVPRARNASKLLNYTVQVPAAGTTRWNPSAEQIKVLEMLYRGGMRTPNSVQIERITEELGKYGRIEGKNVFYWFQNHKARERQKQKRAALLTLSTLDPSLLPATANETKEAPEKKEKDVEDGLASCKRRCKAWGDGAGDGDAVVATEAAGGCTDEVTLELFPLHPQGKA.

Positions 88-152 (AGTTRWNPSA…NHKARERQKQ (65 aa)) form a DNA-binding region, homeobox; WUS-type. A disordered region spans residues 169 to 188 (PATANETKEAPEKKEKDVED). Residues 174 to 187 (ETKEAPEKKEKDVE) show a composition bias toward basic and acidic residues.

The protein belongs to the WUS homeobox family.

The protein localises to the nucleus. Transcription factor which may be involved in developmental processes. In Oryza sativa subsp. indica (Rice), this protein is WUSCHEL-related homeobox 4 (WOX4).